The chain runs to 81 residues: MAAVAAASAELLIIGWYIFRVLLQVFLECCIYWVGFAFRNPPGTQPIARSEVFRYSLQKLAHTVSRTGRQVLGERRQRAPN.

Belongs to the neuronatin family.

Functionally, may participate in the maintenance of segment identity in the hindbrain and pituitary development, and maturation or maintenance of the overall structure of the nervous system. May function as a regulatory subunit of ion channels. This is Neuronatin (NNAT) from Mesocricetus auratus (Golden hamster).